The chain runs to 623 residues: Chaperone protein DnaK (623 aa).

Over residues 582–603 the composition is skewed to low complexity; that stretch reads QQQQAAEQAAQQQSGGQQASGS. The segment at 582 to 623 is disordered; sequence QQQQAAEQAAQQQSGGQQASGSNPGKDPNVVDADYEVVNDKK. The span at 614-623 shows a compositional bias: acidic residues; sequence ADYEVVNDKK.

Belongs to the heat shock protein 70 family.

Functionally, acts as a chaperone. This Methanocella arvoryzae (strain DSM 22066 / NBRC 105507 / MRE50) protein is Chaperone protein DnaK.